Reading from the N-terminus, the 116-residue chain is Flagellar transcriptional regulator FlhD (116 aa).

This sequence belongs to the FlhD family. Homodimer; disulfide-linked. Forms a heterohexamer composed of two FlhC and four FlhD subunits. Each FlhC binds a FlhD dimer, forming a heterotrimer, and a hexamer assembles by dimerization of two heterotrimers.

The protein resides in the cytoplasm. Functions in complex with FlhC as a master transcriptional regulator that regulates transcription of several flagellar and non-flagellar operons by binding to their promoter region. Activates expression of class 2 flagellar genes, including fliA, which is a flagellum-specific sigma factor that turns on the class 3 genes. Also regulates genes whose products function in a variety of physiological pathways. The protein is Flagellar transcriptional regulator FlhD of Xenorhabdus nematophila (Achromobacter nematophilus).